The primary structure comprises 165 residues: UPF0254 protein MmarC6_1720 (165 aa).

This sequence belongs to the UPF0254 family.

In Methanococcus maripaludis (strain C6 / ATCC BAA-1332), this protein is UPF0254 protein MmarC6_1720.